A 687-amino-acid polypeptide reads, in one-letter code: Variant-specific surface protein VSP4A1 (687 aa).

An N-terminal signal peptide occupies residues 1–14; sequence MLLTAFYVVLGSFA. Residues 15–660 lie on the Extracellular side of the membrane; it reads APCQQDGDHI…SGLSTGAIAG (646 aa). Residues 661–681 form a helical membrane-spanning segment; that stretch reads ISVAAIVVVGGLVGFLCWWFI. The Cytoplasmic portion of the chain corresponds to 682-687; it reads CRGKAQ.

The protein belongs to the Giardia variant surface protein family. In terms of processing, O-glycosylated. The major glycan is a trisaccharide with Glc at the reducing terminus. Palmitoylated.

Its subcellular location is the cell membrane. The protein is Variant-specific surface protein VSP4A1 of Giardia intestinalis (Giardia lamblia).